Here is a 243-residue protein sequence, read N- to C-terminus: uncharacterized protein (243 aa).

Positions 1–16 (MKLLALVALCAVGVAS) are cleaved as a signal peptide. N-linked (GlcNAc...) asparagine glycosylation is present at Asn55. Disordered regions lie at residues 95–126 (SQGR…EKPS) and 208–235 (NQQQ…KPTV). 2 stretches are compositionally biased toward low complexity: residues 99–112 (NQQQ…SQGG) and 209–229 (QQQQ…STTL). An intrachain disulfide couples Cys141 to Cys239.

It belongs to the protease inhibitor I33 family.

Its subcellular location is the secreted. This is an uncharacterized protein from Caenorhabditis elegans.